A 425-amino-acid polypeptide reads, in one-letter code: UDP-N-acetylglucosamine 1-carboxyvinyltransferase (425 aa).

23–24 (KN) provides a ligand contact to phosphoenolpyruvate. Position 100 (Arg100) interacts with UDP-N-acetyl-alpha-D-glucosamine. Cys124 functions as the Proton donor in the catalytic mechanism. A 2-(S-cysteinyl)pyruvic acid O-phosphothioketal modification is found at Cys124. The UDP-N-acetyl-alpha-D-glucosamine site is built by Asp313 and Ile335.

The protein belongs to the EPSP synthase family. MurA subfamily.

Its subcellular location is the cytoplasm. The enzyme catalyses phosphoenolpyruvate + UDP-N-acetyl-alpha-D-glucosamine = UDP-N-acetyl-3-O-(1-carboxyvinyl)-alpha-D-glucosamine + phosphate. It participates in cell wall biogenesis; peptidoglycan biosynthesis. Cell wall formation. Adds enolpyruvyl to UDP-N-acetylglucosamine. The polypeptide is UDP-N-acetylglucosamine 1-carboxyvinyltransferase (Wolbachia pipientis wMel).